The following is a 292-amino-acid chain: Rab effector Noc2 (292 aa).

The RabBD domain occupies 41–158 (QRKSQSLSPA…KRSGAWFYKG (118 aa)). An FYVE-type zinc finger spans residues 89-146 (GNGLSQCLLCGEVLGFLGSSSVFCKDCRKKVCTKCGIEASPSQKRPLWLCKICSEQRE). 8 residues coordinate Zn(2+): Cys-95, Cys-98, Cys-112, Cys-115, Cys-120, Cys-123, Cys-138, and Cys-141. Positions 175–292 (PSFRPLPVEP…RTLAGPRGPR (118 aa)) are disordered. Over residues 221 to 235 (LDDRLRPAGVRDPKG) the composition is skewed to basic and acidic residues. Ser-248 is subject to Phosphoserine. A compositionally biased stretch (low complexity) spans 257-269 (ASCLSGSQSSLAS).

Recruited to dense-core vesicles through specific interaction with RAB27A in endocrine cells. Interacts with RAB3A, RAB3B, RAB3C and RAB3D. Interacts with ZYX.

The protein localises to the cytoplasm. The protein resides in the cytoplasmic vesicle. It is found in the secretory vesicle membrane. Functionally, rab GTPase effector involved in the late steps of regulated exocytosis, both in endocrine and exocrine cells. The polypeptide is Rab effector Noc2 (RPH3AL) (Bos taurus (Bovine)).